The chain runs to 40 residues: Photosystem II reaction center protein J (40 aa).

The helical transmembrane segment at 8 to 28 (IPLWIIGTVTGILVIGLVGIF) threads the bilayer.

The protein belongs to the PsbJ family. In terms of assembly, PSII is composed of 1 copy each of membrane proteins PsbA, PsbB, PsbC, PsbD, PsbE, PsbF, PsbH, PsbI, PsbJ, PsbK, PsbL, PsbM, PsbT, PsbX, PsbY, PsbZ, Psb30/Ycf12, at least 3 peripheral proteins of the oxygen-evolving complex and a large number of cofactors. It forms dimeric complexes.

The protein resides in the plastid. Its subcellular location is the chloroplast thylakoid membrane. One of the components of the core complex of photosystem II (PSII). PSII is a light-driven water:plastoquinone oxidoreductase that uses light energy to abstract electrons from H(2)O, generating O(2) and a proton gradient subsequently used for ATP formation. It consists of a core antenna complex that captures photons, and an electron transfer chain that converts photonic excitation into a charge separation. The chain is Photosystem II reaction center protein J from Jasminum nudiflorum (Winter jasmine).